A 1045-amino-acid chain; its full sequence is Isoleucine--tRNA ligase (1045 aa).

The 'HIGH' region motif lies at 49 to 59 (PYCSGRIHLGT). The short motif at 591 to 595 (KMSKS) is the 'KMSKS' region element. K594 is an ATP binding site.

This sequence belongs to the class-I aminoacyl-tRNA synthetase family. IleS type 2 subfamily. In terms of assembly, monomer. Zn(2+) serves as cofactor.

It localises to the cytoplasm. The enzyme catalyses tRNA(Ile) + L-isoleucine + ATP = L-isoleucyl-tRNA(Ile) + AMP + diphosphate. In terms of biological role, catalyzes the attachment of isoleucine to tRNA(Ile). As IleRS can inadvertently accommodate and process structurally similar amino acids such as valine, to avoid such errors it has two additional distinct tRNA(Ile)-dependent editing activities. One activity is designated as 'pretransfer' editing and involves the hydrolysis of activated Val-AMP. The other activity is designated 'posttransfer' editing and involves deacylation of mischarged Val-tRNA(Ile). In Methanothermobacter marburgensis (strain ATCC BAA-927 / DSM 2133 / JCM 14651 / NBRC 100331 / OCM 82 / Marburg) (Methanobacterium thermoautotrophicum), this protein is Isoleucine--tRNA ligase.